We begin with the raw amino-acid sequence, 640 residues long: Chaperone protein DnaK (640 aa).

Threonine 198 bears the Phosphothreonine; by autocatalysis mark. Residues 600–640 (KTQGAGAEGSEQPHGEQEAGGAAKGETVVDADFEEVKDDKK) form a disordered region. Positions 628 to 640 (VDADFEEVKDDKK) are enriched in acidic residues.

This sequence belongs to the heat shock protein 70 family.

In terms of biological role, acts as a chaperone. This chain is Chaperone protein DnaK, found in Geobacter sp. (strain M21).